We begin with the raw amino-acid sequence, 271 residues long: ATP synthase subunit a (271 aa).

5 helical membrane passes run 38–58, 100–120, 146–166, 220–240, and 242–262; these read FWTL…LFLL, LIAP…LMDL, DVNI…FYSI, LIFI…LNVP, and AIFH…LTIV.

Belongs to the ATPase A chain family. As to quaternary structure, F-type ATPases have 2 components, CF(1) - the catalytic core - and CF(0) - the membrane proton channel. CF(1) has five subunits: alpha(3), beta(3), gamma(1), delta(1), epsilon(1). CF(0) has three main subunits: a(1), b(2) and c(9-12). The alpha and beta chains form an alternating ring which encloses part of the gamma chain. CF(1) is attached to CF(0) by a central stalk formed by the gamma and epsilon chains, while a peripheral stalk is formed by the delta and b chains.

It localises to the cell inner membrane. Key component of the proton channel; it plays a direct role in the translocation of protons across the membrane. In Citrobacter koseri (strain ATCC BAA-895 / CDC 4225-83 / SGSC4696), this protein is ATP synthase subunit a.